The following is a 234-amino-acid chain: MRYAVICMLLLAASGCTAARQAPSPEPGLVPPPVVTTPEEKAENPGSLFSDENADLLYADYRARRVGDIVLINIVENSKAENKASTSTNKESTGEYGVSSFFDRSKVGIIPGQTLLSGRTGDVPLLKFSSVSDFSGDGETTRENTVTATIAARVTRVLPGGLMQVEGSRETRVNEETQIVTVSGLVRTSDVADDNSVMSTQMADARISYYGKGVISDKQRVGWFTRLMDNLWPF.

Positions 1–15 (MRYAVICMLLLAASG) are cleaved as a signal peptide. A lipid anchor (N-palmitoyl cysteine) is attached at Cys-16. The S-diacylglycerol cysteine moiety is linked to residue Cys-16.

Belongs to the FlgH family. In terms of assembly, the basal body constitutes a major portion of the flagellar organelle and consists of four rings (L,P,S, and M) mounted on a central rod.

The protein resides in the cell outer membrane. The protein localises to the bacterial flagellum basal body. Assembles around the rod to form the L-ring and probably protects the motor/basal body from shearing forces during rotation. The polypeptide is Flagellar L-ring protein (Oleidesulfovibrio alaskensis (strain ATCC BAA-1058 / DSM 17464 / G20) (Desulfovibrio alaskensis)).